The sequence spans 540 residues: Flavin-dependent halogenase ptaM (540 aa).

A signal peptide spans Met1 to Ala21. FAD-binding residues include Gly14, Ala17, and Glu47. Asn159, Asn192, Asn204, and Asn243 each carry an N-linked (GlcNAc...) asparagine glycan. Residues Ser330 and Gly331 each coordinate chloride. N-linked (GlcNAc...) asparagine glycosylation is found at Asn480, Asn491, and Asn523.

This sequence belongs to the flavin-dependent halogenase family.

It participates in secondary metabolite biosynthesis. In terms of biological role, flavin-dependent halogenase; part of the gene cluster that mediates the biosynthesis of pestheic acid, a diphenyl ether which is a biosynthetic precursor of the unique chloropupukeananes. The biosynthesis initiates from condensation of acetate and malonate units catalyzed by the non-reducing PKS ptaA. As the ptaA protein is TE/CLC domain-deficient, hydrolysis and Claisen cyclization of the polyketide could be catalyzed by ptaB containing a beta-lactamase domain. The ptaB protein might hydrolyze the thioester bond between the ACP of ptaA and the intermediate to release atrochrysone carboxylic acid, which is spontaneously dehydrated to form endocrocin anthrone. Endocrocin anthrone is then converted to endocrocin, catalyzed by the anthrone oxygenase ptaC. Spontaneous decarboxylation of endocrocin occurs to generate emodin. An O-methyltransferase (ptaH or ptaI) could methylate emodin to form physcion. PtaJ could then catalyze the oxidative cleavage of physcion, and rotation of the intermediate could then afford desmethylisosulochrin. PtaF, a putative NADH-dependent oxidoreductase, might also participate in the oxidative cleavage step. Desmethylisosulochrin is then transformed by another O-methyltransferase (ptaH or ptaI) to form isosulochrin. Chlorination of isosulochrin by ptaM in the cyclohexadienone B ring then produces chloroisosulochrin. PtaE is responsible for the oxidative coupling reactions of both benzophenones isosulochrin and chloroisosulochrin to RES-1214-1 and pestheic acid respectively, regardless of chlorination. The sequence is that of Flavin-dependent halogenase ptaM from Pestalotiopsis fici (strain W106-1 / CGMCC3.15140).